Here is a 326-residue protein sequence, read N- to C-terminus: Photosystem II assembly factor Ycf39 (326 aa).

Belongs to the NmrA-type oxidoreductase family. Ycf39 subfamily. In terms of assembly, purified in several chlorophyll- and carotenoid-containing complexes, including photosystem II (PSII) assembly intermediate complex RCII* (iD1, D1, D2, PsbE, PsbF, PsbI, Ycf39, Ycf48, HliC and HliD) and the Ycf39-Hlip complex (Ycf39, HliC, HliD and pigments). Tagged protein does not pull down mature PSII.

It localises to the cellular thylakoid membrane. In terms of biological role, requires HliD to bind pigments. The Ycf39-Hlip complex binds D1 at an early stage of PSII assembly along with Ycf48, ribosomes and ChlG, the last enzyme in chlorophyll biosynthesis; it may be involved in chlorophyll reuse and delivery to D1 in the initial stages of PSII assembly. The Ycf39-Hlip complex efficiently quenches chlorophyll fluorescence, contributing to photoprotection. This is Photosystem II assembly factor Ycf39 from Synechocystis sp. (strain ATCC 27184 / PCC 6803 / Kazusa).